The following is a 137-amino-acid chain: Large ribosomal subunit protein uL16 (137 aa).

The protein belongs to the universal ribosomal protein uL16 family. Part of the 50S ribosomal subunit.

Binds 23S rRNA and is also seen to make contacts with the A and possibly P site tRNAs. In Streptococcus pyogenes serotype M1, this protein is Large ribosomal subunit protein uL16.